The sequence spans 311 residues: Ornithine carbamoyltransferase (311 aa).

Carbamoyl phosphate contacts are provided by residues 59–62 (STRT), Gln86, Arg110, and 137–140 (HPCQ). L-ornithine-binding positions include Asn168, Asp228, and 232–233 (SM). Residues 267–268 (CL) and Arg295 each bind carbamoyl phosphate.

Belongs to the aspartate/ornithine carbamoyltransferase superfamily. OTCase family.

It localises to the cytoplasm. The catalysed reaction is carbamoyl phosphate + L-ornithine = L-citrulline + phosphate + H(+). It functions in the pathway amino-acid biosynthesis; L-arginine biosynthesis; L-arginine from L-ornithine and carbamoyl phosphate: step 1/3. In terms of biological role, reversibly catalyzes the transfer of the carbamoyl group from carbamoyl phosphate (CP) to the N(epsilon) atom of ornithine (ORN) to produce L-citrulline. The protein is Ornithine carbamoyltransferase of Caulobacter vibrioides (strain ATCC 19089 / CIP 103742 / CB 15) (Caulobacter crescentus).